The sequence spans 306 residues: Methionyl-tRNA formyltransferase (306 aa).

Residue 109–112 (SILP) participates in (6S)-5,6,7,8-tetrahydrofolate binding.

This sequence belongs to the Fmt family.

It carries out the reaction L-methionyl-tRNA(fMet) + (6R)-10-formyltetrahydrofolate = N-formyl-L-methionyl-tRNA(fMet) + (6S)-5,6,7,8-tetrahydrofolate + H(+). In terms of biological role, attaches a formyl group to the free amino group of methionyl-tRNA(fMet). The formyl group appears to play a dual role in the initiator identity of N-formylmethionyl-tRNA by promoting its recognition by IF2 and preventing the misappropriation of this tRNA by the elongation apparatus. The protein is Methionyl-tRNA formyltransferase of Sphingopyxis alaskensis (strain DSM 13593 / LMG 18877 / RB2256) (Sphingomonas alaskensis).